The chain runs to 329 residues: Vomeronasal type-1 receptor 42 (329 aa).

Residues 1-32 (MGDILFSSPQSMFSHTMNKNSILHTHSIIGKT) lie on the Extracellular side of the membrane. A helical transmembrane segment spans residues 33–53 (FFSEIGIGISGNSFLLLVHIL). Over 54–65 (KFIRGHRPRLTD) the chain is Cytoplasmic. Residues 66–86 (LPIGLLSLIHLLMLLVAAFIA) traverse the membrane as a helical segment. Topologically, residues 87 to 109 (TDIFISRRGWDDIICKFLVYLYR) are extracellular. Cys101 and Cys188 are joined by a disulfide. Residues 110-130 (VLRGFSLCTTSMLSILQAIIL) traverse the membrane as a helical segment. The Cytoplasmic portion of the chain corresponds to 131–150 (SPRSSCLAKFKHISPHHISG). A helical membrane pass occupies residues 151–171 (AILFLSVLYMLIGSQLLVSII). At 172-209 (ATPNLTMNDFIYVTQSCSILPLSYLMQSIYSTLLAIRE) the chain is on the extracellular side. An N-linked (GlcNAc...) asparagine glycan is attached at Asn175. A helical transmembrane segment spans residues 210–230 (FFLISLMVLSNWYMVALLSMH). Residues 231–254 (RKQTQHLHGTNLSPKKSPEQSATQ) lie on the Cytoplasmic side of the membrane. A helical transmembrane segment spans residues 255 to 275 (TILMLISFFLLMTIYDTIVSC). Over 276 to 285 (SRTMFLNDPT) the chain is Extracellular. Residues 286–306 (SYSIELFIMHIYATVSPFVFM) traverse the membrane as a helical segment. Topologically, residues 307-329 (STEKHIVNFLRSLGKRVINFNLH) are cytoplasmic.

It belongs to the G-protein coupled receptor 1 family.

Its subcellular location is the cell membrane. In terms of biological role, putative pheromone receptor implicated in the regulation of social and reproductive behavior. This chain is Vomeronasal type-1 receptor 42 (Vmn1r42), found in Mus musculus (Mouse).